The chain runs to 342 residues: S-adenosylmethionine:tRNA ribosyltransferase-isomerase (342 aa).

It belongs to the QueA family. As to quaternary structure, monomer.

It localises to the cytoplasm. The enzyme catalyses 7-aminomethyl-7-carbaguanosine(34) in tRNA + S-adenosyl-L-methionine = epoxyqueuosine(34) in tRNA + adenine + L-methionine + 2 H(+). It functions in the pathway tRNA modification; tRNA-queuosine biosynthesis. In terms of biological role, transfers and isomerizes the ribose moiety from AdoMet to the 7-aminomethyl group of 7-deazaguanine (preQ1-tRNA) to give epoxyqueuosine (oQ-tRNA). This is S-adenosylmethionine:tRNA ribosyltransferase-isomerase from Novosphingobium aromaticivorans (strain ATCC 700278 / DSM 12444 / CCUG 56034 / CIP 105152 / NBRC 16084 / F199).